We begin with the raw amino-acid sequence, 298 residues long: N-acetylmuramic acid 6-phosphate etherase (298 aa).

Residues 55–218 enclose the SIS domain; the sequence is IHAQVSGGGR…STGLMIKSGK (164 aa). The Proton donor role is filled by Glu-83. Glu-114 is an active-site residue.

This sequence belongs to the GCKR-like family. MurNAc-6-P etherase subfamily. Homodimer.

The catalysed reaction is N-acetyl-D-muramate 6-phosphate + H2O = N-acetyl-D-glucosamine 6-phosphate + (R)-lactate. It functions in the pathway amino-sugar metabolism; N-acetylmuramate degradation. It participates in amino-sugar metabolism; 1,6-anhydro-N-acetylmuramate degradation. Its pathway is cell wall biogenesis; peptidoglycan recycling. In terms of biological role, specifically catalyzes the cleavage of the D-lactyl ether substituent of MurNAc 6-phosphate, producing GlcNAc 6-phosphate and D-lactate. Together with AnmK, is also required for the utilization of anhydro-N-acetylmuramic acid (anhMurNAc) either imported from the medium or derived from its own cell wall murein, and thus plays a role in cell wall recycling. This Escherichia coli (strain K12 / MC4100 / BW2952) protein is N-acetylmuramic acid 6-phosphate etherase.